Here is a 669-residue protein sequence, read N- to C-terminus: DNA ligase (669 aa).

NAD(+) contacts are provided by residues 34-38 (DAEYD), 83-84 (SL), and E114. Catalysis depends on K116, which acts as the N6-AMP-lysine intermediate. The NAD(+) site is built by R137, E171, K287, and K311. Zn(2+) contacts are provided by C405, C408, C423, and C428. A BRCT domain is found at 591–669 (NVESYFAGKT…EERFLQELNK (79 aa)).

This sequence belongs to the NAD-dependent DNA ligase family. LigA subfamily. Mg(2+) serves as cofactor. It depends on Mn(2+) as a cofactor.

It catalyses the reaction NAD(+) + (deoxyribonucleotide)n-3'-hydroxyl + 5'-phospho-(deoxyribonucleotide)m = (deoxyribonucleotide)n+m + AMP + beta-nicotinamide D-nucleotide.. In terms of biological role, DNA ligase that catalyzes the formation of phosphodiester linkages between 5'-phosphoryl and 3'-hydroxyl groups in double-stranded DNA using NAD as a coenzyme and as the energy source for the reaction. It is essential for DNA replication and repair of damaged DNA. This chain is DNA ligase, found in Bacillus cereus (strain 03BB102).